The following is a 171-amino-acid chain: Lipoprotein signal peptidase (171 aa).

Helical transmembrane passes span 15–35 (WLWLALLVFIADITIKLIVMD), 47–67 (VLPFFNLLYVHNYGAAFSFLS), 72–92 (WQRWLFTGIAFVVTGMLAYWM), and 107–127 (ALIIGGAVGNVFDRIVHGFVV). Catalysis depends on residues aspartate 128 and aspartate 146. The chain crosses the membrane as a helical span at residues 141 to 161 (AFNLADSTICIGAAMIILDGF).

This sequence belongs to the peptidase A8 family.

Its subcellular location is the cell inner membrane. It carries out the reaction Release of signal peptides from bacterial membrane prolipoproteins. Hydrolyzes -Xaa-Yaa-Zaa-|-(S,diacylglyceryl)Cys-, in which Xaa is hydrophobic (preferably Leu), and Yaa (Ala or Ser) and Zaa (Gly or Ala) have small, neutral side chains.. It functions in the pathway protein modification; lipoprotein biosynthesis (signal peptide cleavage). In terms of biological role, this protein specifically catalyzes the removal of signal peptides from prolipoproteins. The chain is Lipoprotein signal peptidase from Vibrio cholerae serotype O1 (strain ATCC 39315 / El Tor Inaba N16961).